We begin with the raw amino-acid sequence, 303 residues long: Short chain dehydrogenase pigC (303 aa).

The NADP(+) site is built by Ile45, Asp103, Asn130, Arg164, Tyr196, Lys200, and Thr231. Tyr196 functions as the Proton donor in the catalytic mechanism. Lys200 serves as the catalytic Lowers pKa of active site Tyr.

The protein belongs to the short-chain dehydrogenases/reductases (SDR) family.

Its pathway is secondary metabolite biosynthesis. Its function is as follows. Short chain dehydrogenase; part of the gene cluster that mediates the biosynthesis of azaphilone pigments (MonAzPs), a complex mixture of compounds with a common azaphilone skeleton very widely used as food colorants. Within the pathway, pigC intercepts the very reactive benzaldehyde produced by the nrPKS pigA to reduce the omega-1 carbonyl to the alcohol to provide the first stable enzyme-free MonAzPs intermediate, 6-(4-hydroxy-2-oxopentyl)-3-methyl-2,4-dioxocyclohexane carbaldehyde, also known as M7PKS-1. The first step of the pathway is performed by the nrPKS pigA that forms the hexaketide precursor from successive condensations of five malonyl-CoA units, with a simple acetyl-CoA starter unit. The role of esterase pigG is not clear, but it may play at most a supplementary role in the formation of the benzaldehyde produced by the pigA nrPKS. This very reactive benzaldehyde is intercepted by the pigC ketoreductase that to provide the first stable enzyme-free MonAzPs intermediate, M7PKS-1. The FAD-dependent monooxygenase pigN hydroxylates M7PKS-1 at C-4, which triggers the formation of the pyran ring. PigJ, pigK and pigD are involved in the acetylation of the pyran ring. PigJ and pigK form the two subunits of a dedicated fungal FAS that produces the side chain fatty acyl moiety of MonAzPs and pigD transfers the fatty acyl chain to the C-4 alcohol. PigM and pigO are involved in the elimination of the omega-1 alcohol. PigM acts as an O-acetyltransferase that synthesizes the putative O-11 acetyl intermediate whereas pigO eliminates acetic acid to yield an intermediate with a C10(11) double bond. The dehydration of the C-11 alcohol followed by the reduction of the C6(7) double bond by the NAD(P)H-dependent oxidoreductase pigE increases the electrophilicity of the C-5 ketone of the resulting acyl benzopyran. This in turn sets up the C-5 ketone for an intramolecular Knoevenagel aldol condensation with the C-20 enol of the side chain. This condensation affords the characteristic linear tricyclic carbon skeletons of the yellow pigments that serve as the common precursors for the classical yellow pigments monascin and ankaflavin, orange pigments rubopunctatin and monascorubrin, and red pigments ribropunctamine and monascorubramine. The FAD-dependent oxidoreductase pigF is especially invoved in the biosynthesis of orange and red pigments via desaturation of C6(7). This Monascus ruber (Mold) protein is Short chain dehydrogenase pigC.